Here is a 101-residue protein sequence, read N- to C-terminus: NAD(P)H-quinone oxidoreductase subunit 4L, chloroplastic (101 aa).

Transmembrane regions (helical) follow at residues 2 to 22 (ILEH…YGLI), 32 to 52 (MCLE…SDFF), and 61 to 81 (IFCI…LAIV).

The protein belongs to the complex I subunit 4L family. As to quaternary structure, NDH is composed of at least 16 different subunits, 5 of which are encoded in the nucleus.

Its subcellular location is the plastid. It is found in the chloroplast thylakoid membrane. The catalysed reaction is a plastoquinone + NADH + (n+1) H(+)(in) = a plastoquinol + NAD(+) + n H(+)(out). The enzyme catalyses a plastoquinone + NADPH + (n+1) H(+)(in) = a plastoquinol + NADP(+) + n H(+)(out). NDH shuttles electrons from NAD(P)H:plastoquinone, via FMN and iron-sulfur (Fe-S) centers, to quinones in the photosynthetic chain and possibly in a chloroplast respiratory chain. The immediate electron acceptor for the enzyme in this species is believed to be plastoquinone. Couples the redox reaction to proton translocation, and thus conserves the redox energy in a proton gradient. The polypeptide is NAD(P)H-quinone oxidoreductase subunit 4L, chloroplastic (Lepidium virginicum (Virginia pepperweed)).